The sequence spans 140 residues: ATP synthase epsilon chain (140 aa).

This sequence belongs to the ATPase epsilon chain family. F-type ATPases have 2 components, CF(1) - the catalytic core - and CF(0) - the membrane proton channel. CF(1) has five subunits: alpha(3), beta(3), gamma(1), delta(1), epsilon(1). CF(0) has three main subunits: a, b and c.

It localises to the cell inner membrane. Its function is as follows. Produces ATP from ADP in the presence of a proton gradient across the membrane. This is ATP synthase epsilon chain from Neisseria meningitidis serogroup B (strain ATCC BAA-335 / MC58).